A 516-amino-acid polypeptide reads, in one-letter code: GMP synthase [glutamine-hydrolyzing] (516 aa).

In terms of domain architecture, Glutamine amidotransferase type-1 spans 5–199; the sequence is SIIVLDFGSQ…ARNICGVTEK (195 aa). Catalysis depends on Cys82, which acts as the Nucleophile. Active-site residues include His173 and Glu175. In terms of domain architecture, GMPS ATP-PPase spans 200–391; the sequence is WKMEHFLKEQ…LGLPESMINR (192 aa). 227–233 is an ATP binding site; it reads SGGVDSS.

In terms of assembly, homodimer.

It carries out the reaction XMP + L-glutamine + ATP + H2O = GMP + L-glutamate + AMP + diphosphate + 2 H(+). It functions in the pathway purine metabolism; GMP biosynthesis; GMP from XMP (L-Gln route): step 1/1. Catalyzes the synthesis of GMP from XMP. The polypeptide is GMP synthase [glutamine-hydrolyzing] (Sulfurimonas denitrificans (strain ATCC 33889 / DSM 1251) (Thiomicrospira denitrificans (strain ATCC 33889 / DSM 1251))).